Reading from the N-terminus, the 321-residue chain is Serine protease 52 (321 aa).

The first 27 residues, 1–27, serve as a signal peptide directing secretion; it reads MKRWKDRRTGLLLPLVLLLFGACSSLA. Positions 56 to 287 constitute a Peptidase S1 domain; the sequence is IVGGKPANIL…YVRWISKQTA (232 aa). Cysteines 81 and 97 form a disulfide. Residues histidine 96 and aspartate 142 each act as charge relay system in the active site. An N-linked (GlcNAc...) asparagine glycan is attached at asparagine 153. Disulfide bonds link cysteine 175/cysteine 242, cysteine 208/cysteine 221, and cysteine 232/cysteine 263. Serine 236 (charge relay system) is an active-site residue. The chain crosses the membrane as a helical span at residues 300–320; that stretch reads ACPLVLSCRAILFLYFVMFLL.

The protein belongs to the peptidase S1 family.

The protein resides in the membrane. Functionally, probable serine protease. This chain is Serine protease 52 (Prss52), found in Mus musculus (Mouse).